A 212-amino-acid polypeptide reads, in one-letter code: uncharacterized protein (212 aa).

The N-terminal stretch at 1-18 (MIPLVALLVLLTLQASPG) is a signal peptide. A helical membrane pass occupies residues 186-208 (IYRLATFFMVSLFVGSFVALVFV).

To A.fulgidus AF_0540.

It localises to the membrane. This is an uncharacterized protein from Archaeoglobus fulgidus (strain ATCC 49558 / DSM 4304 / JCM 9628 / NBRC 100126 / VC-16).